We begin with the raw amino-acid sequence, 442 residues long: 3-ketoacyl-CoA thiolase (442 aa).

C105 acts as the Acyl-thioester intermediate in catalysis. Active-site proton acceptor residues include H398 and C428.

It belongs to the thiolase-like superfamily. Thiolase family. As to quaternary structure, heterotetramer of two alpha chains (FadJ) and two beta chains (FadI).

The protein resides in the cytoplasm. The enzyme catalyses an acyl-CoA + acetyl-CoA = a 3-oxoacyl-CoA + CoA. Its pathway is lipid metabolism; fatty acid beta-oxidation. In terms of biological role, catalyzes the final step of fatty acid oxidation in which acetyl-CoA is released and the CoA ester of a fatty acid two carbons shorter is formed. This chain is 3-ketoacyl-CoA thiolase, found in Aliivibrio fischeri (strain ATCC 700601 / ES114) (Vibrio fischeri).